Consider the following 472-residue polypeptide: Glutamate--tRNA ligase (472 aa).

The 'HIGH' region motif lies at 9 to 19; that stretch reads PSPTGPLHIGS. Residues 237–241 carry the 'KMSKS' region motif; it reads KLSKR. Lys-240 provides a ligand contact to ATP.

This sequence belongs to the class-I aminoacyl-tRNA synthetase family. Glutamate--tRNA ligase type 1 subfamily. As to quaternary structure, monomer.

The protein localises to the cytoplasm. The enzyme catalyses tRNA(Glu) + L-glutamate + ATP = L-glutamyl-tRNA(Glu) + AMP + diphosphate. In terms of biological role, catalyzes the attachment of glutamate to tRNA(Glu) in a two-step reaction: glutamate is first activated by ATP to form Glu-AMP and then transferred to the acceptor end of tRNA(Glu). In Buchnera aphidicola subsp. Baizongia pistaciae (strain Bp), this protein is Glutamate--tRNA ligase.